Here is a 143-residue protein sequence, read N- to C-terminus: Large ribosomal subunit protein uL11 (143 aa).

This sequence belongs to the universal ribosomal protein uL11 family. Part of the ribosomal stalk of the 50S ribosomal subunit. Interacts with L10 and the large rRNA to form the base of the stalk. L10 forms an elongated spine to which L12 dimers bind in a sequential fashion forming a multimeric L10(L12)X complex. One or more lysine residues are methylated.

Its function is as follows. Forms part of the ribosomal stalk which helps the ribosome interact with GTP-bound translation factors. This chain is Large ribosomal subunit protein uL11, found in Burkholderia cenocepacia (strain HI2424).